A 476-amino-acid chain; its full sequence is Glutamyl-tRNA(Gln) amidotransferase subunit A (476 aa).

Active-site charge relay system residues include Lys-76 and Ser-151. The active-site Acyl-ester intermediate is Ser-175.

The protein belongs to the amidase family. GatA subfamily. Heterotrimer of A, B and C subunits.

The catalysed reaction is L-glutamyl-tRNA(Gln) + L-glutamine + ATP + H2O = L-glutaminyl-tRNA(Gln) + L-glutamate + ADP + phosphate + H(+). Its function is as follows. Allows the formation of correctly charged Gln-tRNA(Gln) through the transamidation of misacylated Glu-tRNA(Gln) in organisms which lack glutaminyl-tRNA synthetase. The reaction takes place in the presence of glutamine and ATP through an activated gamma-phospho-Glu-tRNA(Gln). This Chlorobium phaeobacteroides (strain DSM 266 / SMG 266 / 2430) protein is Glutamyl-tRNA(Gln) amidotransferase subunit A.